A 345-amino-acid polypeptide reads, in one-letter code: NADH-quinone oxidoreductase subunit H (345 aa).

8 consecutive transmembrane segments (helical) span residues 13–33 (VLII…LLFL), 84–104 (FMLA…VIPF), 115–135 (VAIL…IMGG), 161–181 (IGLI…SAIV), 190–210 (FFSW…ISAL), 248–268 (YIAI…GWLS), 278–298 (IWMV…KAIV), and 309–329 (LGWK…AFAA).

This sequence belongs to the complex I subunit 1 family. NDH-1 is composed of 14 different subunits. Subunits NuoA, H, J, K, L, M, N constitute the membrane sector of the complex.

It localises to the cell inner membrane. The catalysed reaction is a quinone + NADH + 5 H(+)(in) = a quinol + NAD(+) + 4 H(+)(out). Its function is as follows. NDH-1 shuttles electrons from NADH, via FMN and iron-sulfur (Fe-S) centers, to quinones in the respiratory chain. The immediate electron acceptor for the enzyme in this species is believed to be ubiquinone. Couples the redox reaction to proton translocation (for every two electrons transferred, four hydrogen ions are translocated across the cytoplasmic membrane), and thus conserves the redox energy in a proton gradient. This subunit may bind ubiquinone. This Dinoroseobacter shibae (strain DSM 16493 / NCIMB 14021 / DFL 12) protein is NADH-quinone oxidoreductase subunit H.